Reading from the N-terminus, the 702-residue chain is Ribosomal RNA large subunit methyltransferase K/L (702 aa).

The region spanning 43–154 (LVYQSLMWSR…KETASIALDL (112 aa)) is the THUMP domain.

It belongs to the methyltransferase superfamily. RlmKL family.

It is found in the cytoplasm. It catalyses the reaction guanosine(2445) in 23S rRNA + S-adenosyl-L-methionine = N(2)-methylguanosine(2445) in 23S rRNA + S-adenosyl-L-homocysteine + H(+). The enzyme catalyses guanosine(2069) in 23S rRNA + S-adenosyl-L-methionine = N(2)-methylguanosine(2069) in 23S rRNA + S-adenosyl-L-homocysteine + H(+). Functionally, specifically methylates the guanine in position 2445 (m2G2445) and the guanine in position 2069 (m7G2069) of 23S rRNA. In Shigella dysenteriae serotype 1 (strain Sd197), this protein is Ribosomal RNA large subunit methyltransferase K/L.